Reading from the N-terminus, the 396-residue chain is CCA-adding enzyme (396 aa).

2 residues coordinate ATP: Gly27 and Arg30. CTP contacts are provided by Gly27 and Arg30. Residues Asp40 and Asp42 each contribute to the Mg(2+) site. Positions 111, 154, 157, 160, and 163 each coordinate ATP. The CTP site is built by Arg111, Asp154, Arg157, Arg160, and Arg163.

This sequence belongs to the tRNA nucleotidyltransferase/poly(A) polymerase family. Bacterial CCA-adding enzyme type 3 subfamily. As to quaternary structure, homodimer. Mg(2+) is required as a cofactor.

It catalyses the reaction a tRNA precursor + 2 CTP + ATP = a tRNA with a 3' CCA end + 3 diphosphate. It carries out the reaction a tRNA with a 3' CCA end + 2 CTP + ATP = a tRNA with a 3' CCACCA end + 3 diphosphate. In terms of biological role, catalyzes the addition and repair of the essential 3'-terminal CCA sequence in tRNAs without using a nucleic acid template. Adds these three nucleotides in the order of C, C, and A to the tRNA nucleotide-73, using CTP and ATP as substrates and producing inorganic pyrophosphate. tRNA 3'-terminal CCA addition is required both for tRNA processing and repair. Also involved in tRNA surveillance by mediating tandem CCA addition to generate a CCACCA at the 3' terminus of unstable tRNAs. While stable tRNAs receive only 3'-terminal CCA, unstable tRNAs are marked with CCACCA and rapidly degraded. The polypeptide is CCA-adding enzyme (Pediococcus pentosaceus (strain ATCC 25745 / CCUG 21536 / LMG 10740 / 183-1w)).